Consider the following 260-residue polypeptide: Troponin I 3 (260 aa).

The span at aspartate 192 to glutamate 219 shows a compositional bias: basic and acidic residues. The tract at residues aspartate 192–glutamate 260 is disordered. Over residues proline 231–glutamate 260 the composition is skewed to acidic residues.

It belongs to the troponin I family. In terms of tissue distribution, expressed in body wall muscle from first larval stage to adult. In adults expression is predominantly in vulval and anal muscles, body wall muscle expression is weaker. Also expressed in vulval muscles of hermaphrodites and the sex muscles of males.

Troponin I is the inhibitory subunit of troponin, the thin filament regulatory complex which confers calcium-sensitivity to muscle actomyosin ATPase activity. The protein is Troponin I 3 (tni-3) of Caenorhabditis elegans.